A 198-amino-acid polypeptide reads, in one-letter code: Myb-related protein 340 (198 aa).

2 HTH myb-type domains span residues 10 to 62 (DVEV…LNYL) and 63 to 117 (RPDV…IQKH). 2 DNA-binding regions (H-T-H motif) span residues 38-62 (WNTI…LNYL) and 90-113 (WSKI…NRTR).

As to expression, expressed only in flowers.

It localises to the nucleus. Transcription factor. In Antirrhinum majus (Garden snapdragon), this protein is Myb-related protein 340.